Consider the following 245-residue polypeptide: Endo-chitosanase (245 aa).

The N-terminal stretch at 1–17 (MHFAGIVAIALATGATA) is a signal peptide.

The protein belongs to the glycosyl hydrolase 75 family.

It localises to the secreted. The enzyme catalyses Endohydrolysis of beta-(1-&gt;4)-linkages between D-glucosamine residues in a partly acetylated chitosan.. Functionally, chitosanase catalyzing the endo-type cleavage of chitosan, the deacylated form of chitin. Chitosanase may be crucial in the degradation of the deacetylated portion of chitin in the fungal cell wall. Chitoolisaccharides produced by the hydrolysis of partially N-acetylated chitosan are known to have many biological activities, including antibacterial activity, immune-enhancing effects, and elicitor activity. In Aspergillus oryzae (strain ATCC 42149 / RIB 40) (Yellow koji mold), this protein is Endo-chitosanase (csn).